A 197-amino-acid polypeptide reads, in one-letter code: ATP synthase protein MI25 (197 aa).

A helical transmembrane segment spans residues 30–50 (ISIYNEEMIVARCFIGFLIFS).

This sequence belongs to the ATPase protein MI25 family. In terms of assembly, F-type ATPases have 2 components, CF(1) - the catalytic core - and CF(0) - the membrane proton channel. CF(1) has five subunits: alpha(3), beta(3), gamma(1), delta(1), epsilon(1). CF(0) has three main subunits: a, b and c.

Its subcellular location is the mitochondrion membrane. This is one of the chains of the nonenzymatic component (CF(0) subunit) of the mitochondrial ATPase complex. In Oryza sativa subsp. indica (Rice), this protein is ATP synthase protein MI25.